Here is a 187-residue protein sequence, read N- to C-terminus: Large ribosomal subunit protein uL5 (187 aa).

This sequence belongs to the universal ribosomal protein uL5 family. Part of the 50S ribosomal subunit; part of the 5S rRNA/L5/L18/L25 subcomplex. Contacts the 5S rRNA and the P site tRNA. Forms a bridge to the 30S subunit in the 70S ribosome.

In terms of biological role, this is one of the proteins that bind and probably mediate the attachment of the 5S RNA into the large ribosomal subunit, where it forms part of the central protuberance. In the 70S ribosome it contacts protein S13 of the 30S subunit (bridge B1b), connecting the 2 subunits; this bridge is implicated in subunit movement. Contacts the P site tRNA; the 5S rRNA and some of its associated proteins might help stabilize positioning of ribosome-bound tRNAs. The protein is Large ribosomal subunit protein uL5 of Nocardia farcinica (strain IFM 10152).